A 38-amino-acid chain; its full sequence is Large ribosomal subunit protein bL36A (38 aa).

The protein belongs to the bacterial ribosomal protein bL36 family.

The sequence is that of Large ribosomal subunit protein bL36A from Prochlorococcus marinus (strain MIT 9515).